A 322-amino-acid chain; its full sequence is Transmembrane protein 171 (322 aa).

Helical transmembrane passes span 22–42, 57–77, 112–132, and 159–179; these read IFFL…LSIF, IVLK…VILA, LIFG…GIWV, and FLSL…FFVV. Residues 223–322 form a disordered region; the sequence is PPPYFPESSA…LGAPSDASPP (100 aa). Positions 228–241 are enriched in low complexity; it reads PESSAAAPSPGANS. Polar residues-rich tracts occupy residues 242–267 and 279–289; these read LHQI…NQGA and ISGQGSSSERS.

Its subcellular location is the membrane. This is Transmembrane protein 171 (Tmem171) from Mus musculus (Mouse).